Consider the following 286-residue polypeptide: Probable endonuclease 4 (286 aa).

Zn(2+) is bound by residues H67, H107, E146, D180, H183, H217, D230, H232, and E262.

It belongs to the AP endonuclease 2 family. Zn(2+) is required as a cofactor.

It carries out the reaction Endonucleolytic cleavage to 5'-phosphooligonucleotide end-products.. Endonuclease IV plays a role in DNA repair. It cleaves phosphodiester bonds at apurinic or apyrimidinic (AP) sites, generating a 3'-hydroxyl group and a 5'-terminal sugar phosphate. This chain is Probable endonuclease 4, found in Methanosphaerula palustris (strain ATCC BAA-1556 / DSM 19958 / E1-9c).